We begin with the raw amino-acid sequence, 151 residues long: Ribosome maturation factor RimP (151 aa).

Belongs to the RimP family.

The protein resides in the cytoplasm. Its function is as follows. Required for maturation of 30S ribosomal subunits. This chain is Ribosome maturation factor RimP, found in Shewanella sp. (strain ANA-3).